Consider the following 338-residue polypeptide: Ketol-acid reductoisomerase (NADP(+)) (338 aa).

The KARI N-terminal Rossmann domain occupies 1-181 (MKVFYDKDCD…GGGRAGIIET (181 aa)). Residues 24 to 27 (YGSQ), Arg47, and Ser52 each bind NADP(+). His107 is a catalytic residue. Gly133 contacts NADP(+). The 146-residue stretch at 182-327 (NFREETETDL…GKLRAMMPWI (146 aa)) folds into the KARI C-terminal knotted domain. Mg(2+) is bound by residues Asp190, Glu194, Glu226, and Glu230. Ser251 contacts substrate.

Belongs to the ketol-acid reductoisomerase family. Mg(2+) is required as a cofactor.

The enzyme catalyses (2R)-2,3-dihydroxy-3-methylbutanoate + NADP(+) = (2S)-2-acetolactate + NADPH + H(+). The catalysed reaction is (2R,3R)-2,3-dihydroxy-3-methylpentanoate + NADP(+) = (S)-2-ethyl-2-hydroxy-3-oxobutanoate + NADPH + H(+). The protein operates within amino-acid biosynthesis; L-isoleucine biosynthesis; L-isoleucine from 2-oxobutanoate: step 2/4. Its pathway is amino-acid biosynthesis; L-valine biosynthesis; L-valine from pyruvate: step 2/4. In terms of biological role, involved in the biosynthesis of branched-chain amino acids (BCAA). Catalyzes an alkyl-migration followed by a ketol-acid reduction of (S)-2-acetolactate (S2AL) to yield (R)-2,3-dihydroxy-isovalerate. In the isomerase reaction, S2AL is rearranged via a Mg-dependent methyl migration to produce 3-hydroxy-3-methyl-2-ketobutyrate (HMKB). In the reductase reaction, this 2-ketoacid undergoes a metal-dependent reduction by NADPH to yield (R)-2,3-dihydroxy-isovalerate. The polypeptide is Ketol-acid reductoisomerase (NADP(+)) (Bordetella pertussis (strain Tohama I / ATCC BAA-589 / NCTC 13251)).